A 282-amino-acid polypeptide reads, in one-letter code: NADPH-dependent 7-cyano-7-deazaguanine reductase (282 aa).

88 to 90 (IES) lines the substrate pocket. 90–91 (SK) provides a ligand contact to NADPH. The active-site Thioimide intermediate is the Cys190. The Proton donor role is filled by Asp197. 229–230 (HE) serves as a coordination point for substrate. Residue 258–259 (RG) participates in NADPH binding.

Belongs to the GTP cyclohydrolase I family. QueF type 2 subfamily. In terms of assembly, homodimer.

Its subcellular location is the cytoplasm. It catalyses the reaction 7-aminomethyl-7-carbaguanine + 2 NADP(+) = 7-cyano-7-deazaguanine + 2 NADPH + 3 H(+). The protein operates within tRNA modification; tRNA-queuosine biosynthesis. Its function is as follows. Catalyzes the NADPH-dependent reduction of 7-cyano-7-deazaguanine (preQ0) to 7-aminomethyl-7-deazaguanine (preQ1). The sequence is that of NADPH-dependent 7-cyano-7-deazaguanine reductase from Escherichia coli O157:H7.